The primary structure comprises 120 residues: Large ribosomal subunit protein uL18 (120 aa).

Belongs to the universal ribosomal protein uL18 family. As to quaternary structure, part of the 50S ribosomal subunit; part of the 5S rRNA/L5/L18/L25 subcomplex. Contacts the 5S and 23S rRNAs.

Its function is as follows. This is one of the proteins that bind and probably mediate the attachment of the 5S RNA into the large ribosomal subunit, where it forms part of the central protuberance. The chain is Large ribosomal subunit protein uL18 from Xanthobacter autotrophicus (strain ATCC BAA-1158 / Py2).